Consider the following 294-residue polypeptide: Tetraspanin-15 (294 aa).

At 1–23 (MPRGDSEQVRYCARFSYLWLKFS) the chain is on the cytoplasmic side. Residues 24–44 (LVIYSTVFWLIGGLVLSVGIY) form a helical membrane-spanning segment. Residues 45–62 (AEVERQKYKTLESAFLAP) lie on the Extracellular side of the membrane. Residues 63–83 (AIILILLGVVMFIVSFIGVLA) traverse the membrane as a helical segment. At 84 to 93 (SLRDNLCLLQ) the chain is on the cytoplasmic side. A helical membrane pass occupies residues 94–114 (AFMYILGICLIIELIGGVVAL). Over 115 to 235 (IFRNQTIDFL…WFTDNYTIMA (121 aa)) the chain is Extracellular. N-linked (GlcNAc...) asparagine glycosylation is present at Asn118. 4 cysteine pairs are disulfide-bonded: Cys154/Cys219, Cys155/Cys185, Cys171/Cys179, and Cys186/Cys198. Residues Asn189 and Asn230 are each glycosylated (N-linked (GlcNAc...) asparagine). The helical transmembrane segment at 236 to 256 (GVLLGILLPQFLGVLLTFLYI) threads the bilayer. Residues 257–294 (TRVEDIITEHSVTDGLLGPGTKAGVEAAGTGCCMCYPI) are Cytoplasmic-facing.

It belongs to the tetraspanin (TM4SF) family. In terms of assembly, interacts with ADAM10; the interaction influences ADAM10 substrate specificity, endocytosis and turnover. In terms of processing, palmitoylated.

It is found in the cell membrane. The protein resides in the late endosome membrane. Its function is as follows. Part of TspanC8 subgroup, composed of 6 members that interact with the transmembrane metalloprotease ADAM10. This interaction is required for ADAM10 exit from the endoplasmic reticulum and for enzymatic maturation and trafficking to the cell surface as well as substrate specificity. Different TspanC8/ADAM10 complexes have distinct substrates. Promotes ADAM10-mediated cleavage of CDH2. Negatively regulates ligand-induced Notch activity probably by regulating ADAM10 activity. This Bos taurus (Bovine) protein is Tetraspanin-15 (TSPAN15).